A 317-amino-acid polypeptide reads, in one-letter code: Protein phosphatase PTC7 homolog fig (317 aa).

One can recognise a PPM-type phosphatase domain in the interval 46-312 (PYLVTVVQGR…DDITLILASV (267 aa)). The Mn(2+) site is built by D90, G91, and D235.

It belongs to the PP2C family. It depends on Mg(2+) as a cofactor. Mn(2+) serves as cofactor.

It carries out the reaction O-phospho-L-seryl-[protein] + H2O = L-seryl-[protein] + phosphate. The catalysed reaction is O-phospho-L-threonyl-[protein] + H2O = L-threonyl-[protein] + phosphate. This Drosophila erecta (Fruit fly) protein is Protein phosphatase PTC7 homolog fig.